Reading from the N-terminus, the 518-residue chain is Putative cytochrome P450 CYP13A7 (518 aa).

A heme-binding site is contributed by Cys464.

The protein belongs to the cytochrome P450 family. It depends on heme as a cofactor.

Cytochromes P450 are a group of heme-thiolate monooxygenases. They oxidize a variety of structurally unrelated compounds, including steroids, fatty acids, and xenobiotics. In Caenorhabditis elegans, this protein is Putative cytochrome P450 CYP13A7 (cyp-13A7).